Reading from the N-terminus, the 720-residue chain is Denticleless protein homolog (720 aa).

WD repeat units follow at residues 43–85, 92–131, and 134–174; these read GMPV…TTKL, AHSN…LLGI, and GHQC…KDGF. Residues 164–167 carry the DDB1-binding motif motif; it reads WDTR. The short motif at 193 to 200 is the Nuclear localization signal element; sequence PSKLRKKR. WD repeat units follow at residues 211–250, 266–305, 310–351, and 355–395; these read DFQQ…AAYR, TRKL…TFPV, GHQN…LPPR, and GHSQ…EEEK. Positions 240-243 match the DDB1-binding motif motif; sequence WDLR. Disordered stretches follow at residues 411–437, 476–495, 528–552, and 607–698; these read KPEE…VGSP, PAKL…PSSK, QSLL…KRRL, and NEHE…TSPK. Polar residues predominate over residues 528 to 542; sequence QSLLETSSTPKAQHS. Composition is skewed to basic and acidic residues over residues 543 to 552 and 642 to 660; these read QAEKRAKRRL and CERD…ERKN.

Belongs to the WD repeat cdt2 family. Component of the DCX(DTL) E3 ubiquitin ligase complex, at least composed of CUL4 (CUL4A or CUL4B), DDB1, DTL/CDT2 and RBX1.

The protein resides in the nucleus. Its subcellular location is the cytoplasm. It is found in the cytoskeleton. The protein localises to the microtubule organizing center. It localises to the centrosome. The protein resides in the chromosome. It functions in the pathway protein modification; protein ubiquitination. Its function is as follows. Substrate-specific adapter of a DCX (DDB1-CUL4-X-box) E3 ubiquitin-protein ligase complex required for cell cycle control, DNA damage response and translesion DNA synthesis. The DCX(DTL) complex, also named CRL4(CDT2) complex, mediates the polyubiquitination and subsequent degradation of CDT1, CDKN1A/p21(CIP1), KMT5A and SDE2. CDT1 degradation in response to DNA damage is necessary to ensure proper cell cycle regulation of DNA replication. CDKN1A/p21(CIP1) degradation during S phase or following UV irradiation is essential to control replication licensing. KMT5A degradation is also important for a proper regulation of mechanisms such as TGF-beta signaling, cell cycle progression, DNA repair and cell migration. Most substrates require their interaction with PCNA for their polyubiquitination: substrates interact with PCNA via their PIP-box, and those containing the 'K+4' motif in the PIP box, recruit the DCX(DTL) complex, leading to their degradation. In undamaged proliferating cells, the DCX(DTL) complex also promotes the 'Lys-164' monoubiquitination of PCNA, thereby being involved in PCNA-dependent translesion DNA synthesis. May play a role in the regulation of the circadian clock. The sequence is that of Denticleless protein homolog (DTL) from Gallus gallus (Chicken).